The sequence spans 185 residues: Probable DNA-directed RNA polymerase subunit delta (185 aa).

The 68-residue stretch at 14–81 (LSMIEVAHAI…GDNTWGLRAW (68 aa)) folds into the HTH HARE-type domain. The segment at 90–185 (ATVGENEEDE…DEEDEDEDDE (96 aa)) is disordered. Acidic residues-rich tracts occupy residues 117–167 (DTDD…DDGI) and 175–185 (HDEEDEDEDDE).

It belongs to the RpoE family. RNAP is composed of a core of 2 alpha, a beta and a beta' subunits. The core is associated with a delta subunit and one of several sigma factors.

Participates in both the initiation and recycling phases of transcription. In the presence of the delta subunit, RNAP displays an increased specificity of transcription, a decreased affinity for nucleic acids, and an increased efficiency of RNA synthesis because of enhanced recycling. In Limosilactobacillus reuteri (strain DSM 20016) (Lactobacillus reuteri), this protein is Probable DNA-directed RNA polymerase subunit delta.